The following is a 183-amino-acid chain: Cell division protein ZapC (183 aa).

Belongs to the ZapC family. As to quaternary structure, interacts directly with FtsZ.

It localises to the cytoplasm. Functionally, contributes to the efficiency of the cell division process by stabilizing the polymeric form of the cell division protein FtsZ. Acts by promoting interactions between FtsZ protofilaments and suppressing the GTPase activity of FtsZ. This Xenorhabdus bovienii (strain SS-2004) (Xenorhabdus nematophila subsp. bovienii) protein is Cell division protein ZapC.